Here is a 144-residue protein sequence, read N- to C-terminus: PE family protein PE9 (144 aa).

A PE domain is found at 1 to 87 (MSYMIATPAA…RTLTGGCGVF (87 aa)). The segment at 98–124 (AAEHRAAGAGRRQRRRRSGDGQWRLRQ) is disordered.

The protein belongs to the mycobacterial PE family. Forms a complex with PE10. The complex interacts with human TLR4.

It localises to the secreted. Its subcellular location is the cell wall. The protein localises to the cell surface. Together with PE10, induces macrophage apoptosis through human Toll-like receptor 4 (TLR4) signaling pathway. Interaction with TLR4 leads to increased levels of phospho-IRF-3, increase in the transcript levels of IFN-beta and pro-apoptotic genes, up-regulation of IL-10, down-regulation of IL-1b and enhanced levels of macrophage apoptosis. In Mycobacterium tuberculosis (strain ATCC 25618 / H37Rv), this protein is PE family protein PE9.